A 429-amino-acid chain; its full sequence is Adenylosuccinate synthetase (429 aa).

Residues 12-18 and 40-42 each bind GTP; these read GDEGKGK and GHT. Aspartate 13 functions as the Proton acceptor in the catalytic mechanism. 2 residues coordinate Mg(2+): aspartate 13 and glycine 40. IMP contacts are provided by residues 13–16, 38–41, threonine 129, arginine 143, glutamine 223, threonine 238, and arginine 302; these read DEGK and NAGH. Residue histidine 41 is the Proton donor of the active site. A substrate-binding site is contributed by 298–304; that stretch reads VVTGRKR. GTP contacts are provided by residues arginine 304, 330 to 332, and 412 to 414; these read KLD and STS.

Belongs to the adenylosuccinate synthetase family. In terms of assembly, homodimer. Mg(2+) is required as a cofactor.

The protein localises to the cytoplasm. The enzyme catalyses IMP + L-aspartate + GTP = N(6)-(1,2-dicarboxyethyl)-AMP + GDP + phosphate + 2 H(+). It functions in the pathway purine metabolism; AMP biosynthesis via de novo pathway; AMP from IMP: step 1/2. In terms of biological role, plays an important role in the de novo pathway of purine nucleotide biosynthesis. Catalyzes the first committed step in the biosynthesis of AMP from IMP. The sequence is that of Adenylosuccinate synthetase from Brucella suis (strain ATCC 23445 / NCTC 10510).